The following is a 233-amino-acid chain: Enolase-phosphatase E1 (233 aa).

Residues Asp6 and Glu8 each coordinate Mg(2+). Substrate-binding positions include 128–129 (SS) and Lys163. Asp188 lines the Mg(2+) pocket.

Belongs to the HAD-like hydrolase superfamily. MasA/MtnC family. In terms of assembly, monomer. The cofactor is Mg(2+).

Its subcellular location is the cytoplasm. It is found in the nucleus. The enzyme catalyses 5-methylsulfanyl-2,3-dioxopentyl phosphate + H2O = 1,2-dihydroxy-5-(methylsulfanyl)pent-1-en-3-one + phosphate. It participates in amino-acid biosynthesis; L-methionine biosynthesis via salvage pathway; L-methionine from S-methyl-5-thio-alpha-D-ribose 1-phosphate: step 3/6. It functions in the pathway amino-acid biosynthesis; L-methionine biosynthesis via salvage pathway; L-methionine from S-methyl-5-thio-alpha-D-ribose 1-phosphate: step 4/6. Bifunctional enzyme that catalyzes the enolization of 2,3-diketo-5-methylthiopentyl-1-phosphate (DK-MTP-1-P) into the intermediate 2-hydroxy-3-keto-5-methylthiopentenyl-1-phosphate (HK-MTPenyl-1-P), which is then dephosphorylated to form the acireductone 1,2-dihydroxy-3-keto-5-methylthiopentene (DHK-MTPene). The protein is Enolase-phosphatase E1 of Yarrowia lipolytica (strain CLIB 122 / E 150) (Yeast).